The following is a 253-amino-acid chain: 3-deoxy-manno-octulosonate cytidylyltransferase (253 aa).

This sequence belongs to the KdsB family.

Its subcellular location is the cytoplasm. The catalysed reaction is 3-deoxy-alpha-D-manno-oct-2-ulosonate + CTP = CMP-3-deoxy-beta-D-manno-octulosonate + diphosphate. It participates in nucleotide-sugar biosynthesis; CMP-3-deoxy-D-manno-octulosonate biosynthesis; CMP-3-deoxy-D-manno-octulosonate from 3-deoxy-D-manno-octulosonate and CTP: step 1/1. The protein operates within bacterial outer membrane biogenesis; lipopolysaccharide biosynthesis. Its function is as follows. Activates KDO (a required 8-carbon sugar) for incorporation into bacterial lipopolysaccharide in Gram-negative bacteria. The sequence is that of 3-deoxy-manno-octulosonate cytidylyltransferase from Acinetobacter baumannii (strain AYE).